The sequence spans 407 residues: FK506-binding protein 3 (407 aa).

Disordered regions lie at residues R46–G136, D191–V223, and Q236–V297. Composition is skewed to acidic residues over residues N65 to A88 and D103 to G136. The span at Q236 to V252 shows a compositional bias: acidic residues. Over residues V253 to A272 the composition is skewed to basic and acidic residues. Positions G321–K407 constitute a PPIase FKBP-type domain.

The protein belongs to the FKBP-type PPIase family. FKBP3/4 subfamily.

It localises to the nucleus. Its subcellular location is the nucleolus. It carries out the reaction [protein]-peptidylproline (omega=180) = [protein]-peptidylproline (omega=0). Inhibited by both FK506 and rapamycin. In terms of biological role, PPIases accelerate the folding of proteins. It catalyzes the cis-trans isomerization of proline imidic peptide bonds in oligopeptides. The sequence is that of FK506-binding protein 3 (FPR3) from Yarrowia lipolytica (strain CLIB 122 / E 150) (Yeast).